Reading from the N-terminus, the 345-residue chain is D-alanine--D-alanine ligase (345 aa).

The region spanning 133-332 (KWLCHARGVK…LPHTKRAKVT (200 aa)) is the ATP-grasp domain. 160-211 (AYPIIVKPSRLGSSIGVSIVKDESKLDYALDSAFEFDNTVIVEPFLEGVKEY) lines the ATP pocket. Mg(2+)-binding residues include Asp-284, Glu-296, and Asn-298.

This sequence belongs to the D-alanine--D-alanine ligase family. Mg(2+) serves as cofactor. The cofactor is Mn(2+).

Its subcellular location is the cytoplasm. It catalyses the reaction 2 D-alanine + ATP = D-alanyl-D-alanine + ADP + phosphate + H(+). Its pathway is cell wall biogenesis; peptidoglycan biosynthesis. In terms of biological role, cell wall formation. This is D-alanine--D-alanine ligase from Sulfurimonas denitrificans (strain ATCC 33889 / DSM 1251) (Thiomicrospira denitrificans (strain ATCC 33889 / DSM 1251)).